Here is a 297-residue protein sequence, read N- to C-terminus: N-acetylneuraminate lyase (297 aa).

Aceneuramate-binding residues include Ser-47 and Thr-48. Tyr-137 (proton donor) is an active-site residue. Residue Lys-165 is the Schiff-base intermediate with substrate of the active site. Aceneuramate-binding residues include Thr-167, Gly-189, Asp-191, Glu-192, and Ser-208.

This sequence belongs to the DapA family. NanA subfamily. In terms of assembly, homotetramer.

It is found in the cytoplasm. It carries out the reaction aceneuramate = aldehydo-N-acetyl-D-mannosamine + pyruvate. It functions in the pathway amino-sugar metabolism; N-acetylneuraminate degradation; D-fructose 6-phosphate from N-acetylneuraminate: step 1/5. Catalyzes the reversible aldol cleavage of N-acetylneuraminic acid (sialic acid; Neu5Ac) to form pyruvate and N-acetylmannosamine (ManNAc) via a Schiff base intermediate. The polypeptide is N-acetylneuraminate lyase (Citrobacter koseri (strain ATCC BAA-895 / CDC 4225-83 / SGSC4696)).